The chain runs to 600 residues: Elongation factor 4 (600 aa).

The tr-type G domain occupies 4–186; that stretch reads SKIRNFSIIA…AIVEKIPSPS (183 aa). Residues 16 to 21 and 133 to 136 each bind GTP; these read DHGKST and NKID.

This sequence belongs to the TRAFAC class translation factor GTPase superfamily. Classic translation factor GTPase family. LepA subfamily.

It localises to the cell membrane. It carries out the reaction GTP + H2O = GDP + phosphate + H(+). Its function is as follows. Required for accurate and efficient protein synthesis under certain stress conditions. May act as a fidelity factor of the translation reaction, by catalyzing a one-codon backward translocation of tRNAs on improperly translocated ribosomes. Back-translocation proceeds from a post-translocation (POST) complex to a pre-translocation (PRE) complex, thus giving elongation factor G a second chance to translocate the tRNAs correctly. Binds to ribosomes in a GTP-dependent manner. This chain is Elongation factor 4, found in Mycoplasma mycoides subsp. mycoides SC (strain CCUG 32753 / NCTC 10114 / PG1).